The primary structure comprises 132 residues: Pre-histone-like nucleoprotein (132 aa).

Residues Ala2–Gly23 constitute a propeptide that is removed on maturation. Positions Arg124–Lys132 match the Nuclear localization signal motif.

The protein belongs to the adenoviridae histone-like nucleoprotein family. In terms of assembly, interacts with the core-capsid bridging protein; this interaction bridges the virus core to the capsid. Interacts with host NPM1; this interaction might play a role in placing the pre-histone-like nucleoprotein on the viral DNA or regulating viral gene expression. Interacts with host HMGB1; this interaction inhibits host immune response. Post-translationally, cleaved near the N-terminus by the viral protease during virion maturation to form the mature protein.

It is found in the virion. The protein localises to the host nucleus. It localises to the host nucleolus. Plays a role in the inhibition of host immune response within the nucleus. Interacts with cellular nucleosomes and immobilizes the host immune danger signal HMGB1 on chromatin. In turn, prevents HMGB1 release out of the cell and thus decreases inflammation. Also plays a role in the wrapping and condensation of the viral DNA. May also promote viral genome import into the nucleus. This is Pre-histone-like nucleoprotein from Canine adenovirus serotype 1 (strain CLL) (CAdV-1).